A 213-amino-acid polypeptide reads, in one-letter code: MPTTGPPPPLPGDRPLPSSFDNDEDFYNENGFQKIARKLKQEPLVPLGCVLTVAAFTGAYRAMRAGDHGRVNRMFRYRIAAQGFTILAMVAGGIYYSDDRHKEREMWKAKRDADEEEKRLKWIKELEARDEEDKLAKEIMDKRRQRAAAAAAKREGRAVEDKAAEGGAAAAQDAKSSSGLSWASAPGWFGGNKNEPDANAQTNTGDAEKPSEK.

Over residues 1 to 14 (MPTTGPPPPLPGDR) the composition is skewed to pro residues. The tract at residues 1 to 23 (MPTTGPPPPLPGDRPLPSSFDND) is disordered. The HIG1 domain occupies 16–107 (LPSSFDNDED…DDRHKEREMW (92 aa)). A run of 2 helical transmembrane segments spans residues 44–63 (LVPLGCVLTVAAFTGAYRAM) and 75–97 (FRYRIAAQGFTILAMVAGGIYYS). A coiled-coil region spans residues 100-149 (RHKEREMWKAKRDADEEEKRLKWIKELEARDEEDKLAKEIMDKRRQRAAA). Residues 142–213 (KRRQRAAAAA…TGDAEKPSEK (72 aa)) are disordered. Positions 152-164 (AKREGRAVEDKAA) are enriched in basic and acidic residues. Low complexity predominate over residues 165 to 175 (EGGAAAAQDAK).

Belongs to the RCF1 family. As to quaternary structure, associates with the respiratory chain complex III/complex IV supercomplex.

It is found in the mitochondrion membrane. Functionally, cytochrome c oxidase subunit which plays a role in assembly of respiratory supercomplexes. The protein is Respiratory supercomplex factor 1, mitochondrial (RCF1) of Pyricularia oryzae (strain 70-15 / ATCC MYA-4617 / FGSC 8958) (Rice blast fungus).